A 1320-amino-acid chain; its full sequence is Probable inactive ATP-dependent zinc metalloprotease FTSHI 5, chloroplastic (1320 aa).

A chloroplast-targeting transit peptide spans 1–43 (MDFISASSLSSPFSTQLSPIYLSSGIVSLKPRHRVKNRNFGSR). The next 3 membrane-spanning stretches (helical) occupy residues 571-591 (LYLK…WIPM), 633-653 (NIND…IIPY), and 695-715 (FQWF…LYHV). 824-831 (GERGTGKT) lines the ATP pocket.

It in the N-terminal section; belongs to the AAA ATPase family. This sequence in the C-terminal section; belongs to the peptidase M41 family. As to quaternary structure, oligomer.

The protein resides in the plastid. The protein localises to the chloroplast membrane. Required for plastid development during embryogenesis. Might be involved in chaperone functions or play a structural role in the thylakoid FtsH complex. This Arabidopsis thaliana (Mouse-ear cress) protein is Probable inactive ATP-dependent zinc metalloprotease FTSHI 5, chloroplastic.